The primary structure comprises 232 residues: Octanoyltransferase (232 aa).

Residues 33-216 (GRAQDTVILL…HLVRALSNGS (184 aa)) enclose the BPL/LPL catalytic domain. Residues 71 to 78 (RGGRITWH), 146 to 148 (AIG), and 159 to 161 (GFA) each bind substrate. Cys177 acts as the Acyl-thioester intermediate in catalysis.

This sequence belongs to the LipB family.

It localises to the cytoplasm. It carries out the reaction octanoyl-[ACP] + L-lysyl-[protein] = N(6)-octanoyl-L-lysyl-[protein] + holo-[ACP] + H(+). It participates in protein modification; protein lipoylation via endogenous pathway; protein N(6)-(lipoyl)lysine from octanoyl-[acyl-carrier-protein]: step 1/2. In terms of biological role, catalyzes the transfer of endogenously produced octanoic acid from octanoyl-acyl-carrier-protein onto the lipoyl domains of lipoate-dependent enzymes. Lipoyl-ACP can also act as a substrate although octanoyl-ACP is likely to be the physiological substrate. In Clavibacter sepedonicus (Clavibacter michiganensis subsp. sepedonicus), this protein is Octanoyltransferase.